The primary structure comprises 354 residues: 5,10-methenyltetrahydromethanopterin hydrogenase (354 aa).

Belongs to the HMD family.

The enzyme catalyses 5,10-methenyl-5,6,7,8-tetrahydromethanopterin + H2 = 5,10-methylenetetrahydromethanopterin + H(+). Its pathway is one-carbon metabolism; methanogenesis from CO(2); 5,10-methylene-5,6,7,8-tetrahydromethanopterin from 5,10-methenyl-5,6,7,8-tetrahydromethanopterin (hydrogen route): step 1/1. Functionally, catalyzes the reversible reduction of methenyl-H(4)MPT(+) to methylene-H(4)MPT. In Methanococcus vannielii (strain ATCC 35089 / DSM 1224 / JCM 13029 / OCM 148 / SB), this protein is 5,10-methenyltetrahydromethanopterin hydrogenase.